The chain runs to 276 residues: Large ribosomal subunit protein uL2 (276 aa).

The tract at residues 212 to 276 is disordered; sequence NRHRGIRPQT…KLIISRKKHK (65 aa). Positions 257–276 are enriched in basic residues; that stretch reads YKTRKKKASDKLIISRKKHK.

This sequence belongs to the universal ribosomal protein uL2 family. In terms of assembly, part of the 50S ribosomal subunit. Forms a bridge to the 30S subunit in the 70S ribosome.

One of the primary rRNA binding proteins. Required for association of the 30S and 50S subunits to form the 70S ribosome, for tRNA binding and peptide bond formation. It has been suggested to have peptidyltransferase activity; this is somewhat controversial. Makes several contacts with the 16S rRNA in the 70S ribosome. The sequence is that of Large ribosomal subunit protein uL2 from Helicobacter acinonychis (strain Sheeba).